Reading from the N-terminus, the 100-residue chain is Putative ESAT-6-like protein Y (100 aa).

It belongs to the WXG100 family.

The protein is Putative ESAT-6-like protein Y of Mycobacterium leprae (strain TN).